We begin with the raw amino-acid sequence, 220 residues long: Fructose-6-phosphate aldolase 1 (220 aa).

The active-site Schiff-base intermediate with substrate is the lysine 85.

This sequence belongs to the transaldolase family. Type 3A subfamily. In terms of assembly, homodecamer.

Its subcellular location is the cytoplasm. It catalyses the reaction beta-D-fructose 6-phosphate = dihydroxyacetone + D-glyceraldehyde 3-phosphate. In terms of biological role, catalyzes the reversible formation of fructose 6-phosphate from dihydroxyacetone and D-glyceraldehyde 3-phosphate via an aldolization reaction. The sequence is that of Fructose-6-phosphate aldolase 1 (fsaA) from Escherichia coli O6:H1 (strain CFT073 / ATCC 700928 / UPEC).